Consider the following 685-residue polypeptide: Polyphosphate kinase (685 aa).

Position 45 (N45) interacts with ATP. Residues R372 and R402 each contribute to the Mg(2+) site. One can recognise a PLD phosphodiesterase 1 domain in the interval 427–461 (PGLKIHAKLFLISRKEGDDVVRYAHIGTGNFNEKT). H432 (phosphohistidine intermediate) is an active-site residue. Positions 465, 561, and 589 each coordinate ATP. Residues 584 to 614 (DRYLEHDRIYIFDNAGDKQVYLSSADWMTRN) form the PLD phosphodiesterase 2 domain.

Belongs to the polyphosphate kinase 1 (PPK1) family. Mg(2+) is required as a cofactor. In terms of processing, an intermediate of this reaction is the autophosphorylated ppk in which a phosphate is covalently linked to a histidine residue through a N-P bond.

It carries out the reaction [phosphate](n) + ATP = [phosphate](n+1) + ADP. Functionally, catalyzes the reversible transfer of the terminal phosphate of ATP to form a long-chain polyphosphate (polyP). This Klebsiella pneumoniae protein is Polyphosphate kinase.